Reading from the N-terminus, the 354-residue chain is Uroporphyrinogen decarboxylase (354 aa).

Residues 27-31, Asp77, Tyr154, Thr209, and His327 contribute to the substrate site; that span reads RQAGR.

Belongs to the uroporphyrinogen decarboxylase family. Homodimer.

The protein resides in the cytoplasm. The enzyme catalyses uroporphyrinogen III + 4 H(+) = coproporphyrinogen III + 4 CO2. The protein operates within porphyrin-containing compound metabolism; protoporphyrin-IX biosynthesis; coproporphyrinogen-III from 5-aminolevulinate: step 4/4. Its function is as follows. Catalyzes the decarboxylation of four acetate groups of uroporphyrinogen-III to yield coproporphyrinogen-III. In Escherichia coli (strain UTI89 / UPEC), this protein is Uroporphyrinogen decarboxylase.